The primary structure comprises 337 residues: Formamidase (337 aa).

Positions 14-257 constitute a CN hydrolase domain; sequence VVIGLVQLQL…DEIITAEVRP (244 aa). E60 serves as the catalytic Proton acceptor. Residue K129 is the Proton donor of the active site. Residue C162 is the Nucleophile of the active site.

This sequence belongs to the carbon-nitrogen hydrolase superfamily. Aliphatic amidase family.

The catalysed reaction is formamide + H2O = formate + NH4(+). Functionally, is an aliphatic amidase with a restricted substrate specificity, as it only hydrolyzes formamide. This chain is Formamidase, found in Bradyrhizobium sp. (strain ORS 278).